Reading from the N-terminus, the 343-residue chain is uncharacterized protein (343 aa).

This sequence belongs to the IIV-6 219L family.

This is an uncharacterized protein from Invertebrate iridescent virus 6 (IIV-6).